Here is a 543-residue protein sequence, read N- to C-terminus: Organic anion transporter 3 (543 aa).

At 1–21 the chain is on the cytoplasmic side; the sequence is MTFAELVDRVGSKGPFQLLHT. A helical membrane pass occupies residues 22–42; the sequence is VLLGLPILGMANHNLLQIFTA. At 43 to 124 the chain is on the extracellular side; the sequence is PTPAHHCRPP…LVCSSSKLKE (82 aa). Asn-81 carries an N-linked (GlcNAc...) asparagine glycan. The helical transmembrane segment at 125–145 threads the bilayer; that stretch reads MAQSVFMAGILVGGLVLGALS. The Cytoplasmic segment spans residues 146–151; that stretch reads DRFGRK. The chain crosses the membrane as a helical span at residues 152-172; that stretch reads PILIFSYLLLGASGSGAAFSP. Topologically, residues 173–181 are extracellular; that stretch reads TFSIYAVFR. Residues 182–202 form a helical membrane-spanning segment; sequence FLCGFSISGISLSTAILNVEW. Residues 203–212 are Cytoplasmic-facing; the sequence is VSTRFRAIKS. A helical membrane pass occupies residues 213-233; sequence IAVGFFYTFGQFILPGLAYAI. Residues 234-237 are Extracellular-facing; sequence PQWR. Residues 238–258 traverse the membrane as a helical segment; sequence WLQLTVSVPFLTFFLLSWWLP. Residues 259-328 lie on the Cytoplasmic side of the membrane; it reads ESIRWMVLSG…FRTPVLRRVT (70 aa). A helical membrane pass occupies residues 329-349; sequence LCLSLAWFATGFAYYSLAMGV. At 350–355 the chain is on the extracellular side; it reads EEFGVN. Residues 356–376 form a helical membrane-spanning segment; the sequence is LYVLQLIFGGVDVPAKFITML. At 377-388 the chain is on the cytoplasmic side; that stretch reads SISYLGRHITEG. Residues 389–409 form a helical membrane-spanning segment; that stretch reads IVLLLAGGCILALIFVPLDLM. Topologically, residues 410–412 are extracellular; sequence TLR. Residues 413–433 traverse the membrane as a helical segment; it reads TVLAVFGKGCLSGSFSCLFLY. Over 434–472 the chain is Cytoplasmic; that stretch reads TSELYPTVIRQTGMGASNLWARVGSMTAPLVKITGELQP. The helical transmembrane segment at 473-493 threads the bilayer; that stretch reads FIPNIIFGTIALLGGSAALFL. At 494–543 the chain is on the extracellular side; that stretch reads PETLNRPLPETIEDIETWSLRAKEPKPEPEAEKSSQRIPLQPCEPGPGPS. The segment at 513–543 is disordered; the sequence is LRAKEPKPEPEAEKSSQRIPLQPCEPGPGPS. Positions 514–528 are enriched in basic and acidic residues; that stretch reads RAKEPKPEPEAEKSS.

Belongs to the major facilitator (TC 2.A.1) superfamily. Organic cation transporter (TC 2.A.1.19) family. Expressed in kidney.

It localises to the basolateral cell membrane. The enzyme catalyses estrone 3-sulfate(out) + glutarate(in) = estrone 3-sulfate(in) + glutarate(out). It catalyses the reaction estrone 3-sulfate(in) + 2-oxoglutarate(out) = estrone 3-sulfate(out) + 2-oxoglutarate(in). The catalysed reaction is glutarate(in) + 2-oxoglutarate(out) = glutarate(out) + 2-oxoglutarate(in). It carries out the reaction urate(in) + 2-oxoglutarate(out) = urate(out) + 2-oxoglutarate(in). The enzyme catalyses taurocholate(out) + glutarate(in) = taurocholate(in) + glutarate(out). It catalyses the reaction dehydroepiandrosterone 3-sulfate(out) + glutarate(in) = dehydroepiandrosterone 3-sulfate(in) + glutarate(out). The catalysed reaction is prostaglandin F2alpha(out) + glutarate(in) = prostaglandin F2alpha(in) + glutarate(out). It carries out the reaction prostaglandin F2alpha(out) + 2-oxoglutarate(in) = prostaglandin F2alpha(in) + 2-oxoglutarate(out). The enzyme catalyses (R)-carnitine(out) + 2-oxoglutarate(in) = (R)-carnitine(in) + 2-oxoglutarate(out). It catalyses the reaction glutarate(in) + (R)-carnitine(out) = glutarate(out) + (R)-carnitine(in). The catalysed reaction is prostaglandin E2(out) + 2-oxoglutarate(in) = prostaglandin E2(in) + 2-oxoglutarate(out). It carries out the reaction prostaglandin E2(out) + glutarate(in) = prostaglandin E2(in) + glutarate(out). The enzyme catalyses urate(in) + glutarate(out) = urate(out) + glutarate(in). It catalyses the reaction taurocholate(out) + 2-oxoglutarate(in) = taurocholate(in) + 2-oxoglutarate(out). The catalysed reaction is dehydroepiandrosterone 3-sulfate(out) + 2-oxoglutarate(in) = dehydroepiandrosterone 3-sulfate(in) + 2-oxoglutarate(out). It carries out the reaction kynurenate(out) + a dicarboxylate(in) = kynurenate(in) + a dicarboxylate(out). The enzyme catalyses (indol-3-yl)acetate(out) + a dicarboxylate(in) = (indol-3-yl)acetate(in) + a dicarboxylate(out). It catalyses the reaction indoxyl sulfate(out) + a dicarboxylate(in) = indoxyl sulfate(in) + a dicarboxylate(out). The catalysed reaction is N-benzoylglycine(out) + a dicarboxylate(in) = N-benzoylglycine(in) + a dicarboxylate(out). It carries out the reaction 3-carboxy-4-methyl-5-propyl-2-furanpropanoate(out) + a dicarboxylate(in) = 3-carboxy-4-methyl-5-propyl-2-furanpropanoate(in) + a dicarboxylate(out). The enzyme catalyses (6R)-L-erythro-5,6,7,8-tetrahydrobiopterin(out) + a dicarboxylate(in) = (6R)-L-erythro-5,6,7,8-tetrahydrobiopterin(in) + a dicarboxylate(out). It catalyses the reaction L-erythro-7,8-dihydrobiopterin(out) + a dicarboxylate(in) = L-erythro-7,8-dihydrobiopterin(in) + a dicarboxylate(out). The catalysed reaction is L-sepiapterin(out) + a dicarboxylate(in) = L-sepiapterin(in) + a dicarboxylate(out). Functionally, functions as an organic anion/dicarboxylate exchanger that couples organic anion uptake indirectly to the sodium gradient. Transports organic anions such as estrone 3-sulfate (E1S) and urate in exchange for dicarboxylates such as glutarate or ketoglutarate (2-oxoglutarate). Plays an important role in the excretion of endogenous and exogenous organic anions, especially from the kidney and the brain. E1S transport is pH- and chloride-dependent and may also involve E1S/cGMP exchange. Responsible for the transport of prostaglandin E2 (PGE2) and prostaglandin F2(alpha) (PGF2(alpha)) in the basolateral side of the renal tubule. Involved in the transport of neuroactive tryptophan metabolites kynurenate and xanthurenate. Functions as a biopterin transporters involved in the uptake and the secretion of coenzymes tetrahydrobiopterin (BH4), dihydrobiopterin (BH2) and sepiapterin to urine, thereby determining baseline levels of blood biopterins. May be involved in the basolateral transport of steviol, a metabolite of the popular sugar substitute stevioside. May participate in the detoxification/ renal excretion of drugs and xenobiotics, such as the histamine H(2)-receptor antagonists fexofenadine and cimetidine, the antibiotic benzylpenicillin (PCG), the anionic herbicide 2,4-dichloro-phenoxyacetate (2,4-D), the diagnostic agent p-aminohippurate (PAH), the antiviral acyclovir (ACV), and the mycotoxin ochratoxin (OTA), by transporting these exogenous organic anions across the cell membrane in exchange for dicarboxylates such as 2-oxoglutarate. Contributes to the renal uptake of potent uremic toxins (indoxyl sulfate (IS), indole acetate (IA), hippurate/N-benzoylglycine (HA) and 3-carboxy-4-methyl-5-propyl-2-furanpropionate (CMPF)), pravastatin, PCG, E1S and dehydroepiandrosterone sulfate (DHEAS), and is partly involved in the renal uptake of temocaprilat (an angiotensin-converting enzyme (ACE) inhibitor). May contribute to the release of cortisol in the adrenals. Involved in one of the detoxification systems on the choroid plexus (CP), removes substrates such as E1S or taurocholate (TC), PCG, 2,4-D and PAH, from the cerebrospinal fluid (CSF) to the blood for eventual excretion in urine and bile. Also contributes to the uptake of several other organic compounds such as the prostanoids prostaglandin E(2) and prostaglandin F(2-alpha), L-carnitine, and the therapeutic drugs allopurinol, 6-mercaptopurine (6-MP) and 5-fluorouracil (5-FU). Mediates the transport of PAH, PCG, and the statins pravastatin and pitavastatin, from the cerebrum into the blood circulation across the blood-brain barrier (BBB). In summary, plays a role in the efflux of drugs and xenobiotics, helping reduce their undesired toxicological effects on the body. In Sus scrofa (Pig), this protein is Organic anion transporter 3 (SLC22A8).